A 192-amino-acid chain; its full sequence is Fe/S biogenesis protein NfuA (192 aa).

[4Fe-4S] cluster is bound by residues Cys-150 and Cys-153.

This sequence belongs to the NfuA family. In terms of assembly, homodimer. [4Fe-4S] cluster is required as a cofactor.

Functionally, involved in iron-sulfur cluster biogenesis. Binds a 4Fe-4S cluster, can transfer this cluster to apoproteins, and thereby intervenes in the maturation of Fe/S proteins. Could also act as a scaffold/chaperone for damaged Fe/S proteins. The chain is Fe/S biogenesis protein NfuA from Ruthia magnifica subsp. Calyptogena magnifica.